Here is a 693-residue protein sequence, read N- to C-terminus: MPLFADAAARAATLRAEIARHNHAYYVLDTPTIPDAEYDRLFRELQDIEAAHPELLTPDSPTQRVGGAPLPELVPVRHAVPMLSIRTETDTTAQGVRNFDTRVRNALGLGDGDPAVEYLSELKFDGLAISLRYEHGVLVRAATRGDGETGEDVTHNVRTIQQIPLRLHGAAPAVIEVRGEIYMRRDDFEALNNRQREAGDKVFVNPRNAAAGAVRQLDPRIAARRPLSFFAYGLGEHAGFDLPATQAELLTRLAAFGVPVCEHREVSSGPEGLIAFHDRIAALRNELPYDIDGVVYKVNRVDLQRELGFVTREPRWAVAHKYPAQEEITRLAGIDVQVGRTGALTPVARLEPVFVGGVTVTNATLHNQDEIDRKDVRVGDWVIVRRAGDVIPEVVGPVLERRVGEPPRFNLLASYPTCPVCGSHVVRGEDEAVARCSGGLFCPAQRKQALLHFAGRRAMDIEGLGDKLVEQLVDASIVKTPADLYKLGILALANLERMGEKSAQNLLAAIEKSRNTTLARFIFALGIRNVGEATAKDLARHFGSLDALLAADEGALQQVPDVGPVVAKCIAEFFAEAHNVEVVEQLRAAGLRWEEGAPAAPASGSVAGLTFVITGTLPTLSRDEAKALIEAHGGKVSGSVSKKTDYLVAGAEAGSKLAKAQDLGVDIVDEDGLRRLLESGEQSPINNKDGVPE.

NAD(+) contacts are provided by residues 35 to 39 (DAEYD), 84 to 85 (SI), and Glu-121. Lys-123 serves as the catalytic N6-AMP-lysine intermediate. The NAD(+) site is built by Arg-144, Glu-180, Lys-297, and Lys-321. The Zn(2+) site is built by Cys-418, Cys-421, Cys-436, and Cys-442. A BRCT domain is found at 601–690 (PASGSVAGLT…EQSPINNKDG (90 aa)).

The protein belongs to the NAD-dependent DNA ligase family. LigA subfamily. Mg(2+) serves as cofactor. It depends on Mn(2+) as a cofactor.

The catalysed reaction is NAD(+) + (deoxyribonucleotide)n-3'-hydroxyl + 5'-phospho-(deoxyribonucleotide)m = (deoxyribonucleotide)n+m + AMP + beta-nicotinamide D-nucleotide.. Its function is as follows. DNA ligase that catalyzes the formation of phosphodiester linkages between 5'-phosphoryl and 3'-hydroxyl groups in double-stranded DNA using NAD as a coenzyme and as the energy source for the reaction. It is essential for DNA replication and repair of damaged DNA. The chain is DNA ligase from Azoarcus sp. (strain BH72).